We begin with the raw amino-acid sequence, 666 residues long: Transmembrane protein 201 (666 aa).

Residue M1 is modified to N-acetylmethionine. At 1 to 213 the chain is on the nuclear side; sequence MEGVSALLAR…FSSAVKSPVQ (213 aa). Residues 214–234 form a helical membrane-spanning segment; the sequence is VILLRALAFLACAFLLTTALY. Residues 235 to 297 lie on the Perinuclear space side of the membrane; that stretch reads GASGHFAPGT…EAWAFGQSHQ (63 aa). Residues 298-318 form a helical membrane-spanning segment; it reads TGVVALGLLTCLLAMLLAGRI. The Nuclear portion of the chain corresponds to 319-322; sequence RLRR. The helical transmembrane segment at 323–343 threads the bilayer; that stretch reads IDAFCTCLWALLLGLHLAEQH. Over 344 to 356 the chain is Perinuclear space; sequence LQAASPSWLDTLK. Residues 357 to 374 traverse the membrane as a helical segment; the sequence is FSTTSLCCLVGFTAAVAT. At 375–644 the chain is on the nuclear side; it reads RKATGPRRFR…GRFGPSLVRG (270 aa). Residues S441, S444, S450, S454, S466, S477, and S480 each carry the phosphoserine modification. The segment at 502–581 is disordered; that stretch reads PLPSPAPSVA…PPHVPRKPPL (80 aa). Low complexity predominate over residues 508–520; the sequence is PSVAGSVASSSGS. The residue at position 529 (S529) is a Phosphoserine. Residues 645-665 traverse the membrane as a helical segment; sequence LLAVSLAANALFTSVFLYQSL. A topological domain (perinuclear space) is located at residue R666.

It belongs to the TMEM201 family. Interacts with SUN2 and LMNA. May bind to Ran GTPase; has a greater affinity for Ran-GTP over Ran-GDP. In terms of assembly, interacts with EMD.

The protein resides in the nucleus inner membrane. The protein localises to the cytoplasm. It localises to the cytoskeleton. Its subcellular location is the spindle pole. In terms of biological role, critical regulator of angiogenesis and endothelial cell (EC) migration. Promotes the migration of endothelial cells, which is essential for angiogenesis. Interacts with the linker of nucleoskeleton and cytoskeleton (LINC) complex, which plays a vital role in connecting the cell's cytoskeleton to the nuclear envelope. This interaction is essential for maintaining cellular structure and facilitating the movement of endothelial cells, which is critical for proper vascular development. Involved in nuclear movement during fibroblast polarization and migration. Overexpression can recruit Ran GTPase to the nuclear periphery. Its function is as follows. May define a distinct membrane domain in the vicinity of the mitotic spindle. Involved in the organization of the nuclear envelope implicating EMD, SUN1 and A-type lamina. This Homo sapiens (Human) protein is Transmembrane protein 201 (TMEM201).